A 314-amino-acid polypeptide reads, in one-letter code: 2,3-dihydroxyphenylpropionate/2,3-dihydroxicinnamic acid 1,2-dioxygenase 2 (314 aa).

Residue His115 is the Proton donor of the active site. His179 functions as the Proton acceptor in the catalytic mechanism.

It belongs to the LigB/MhpB extradiol dioxygenase family. Homotetramer. The cofactor is Fe(2+).

The enzyme catalyses 3-(2,3-dihydroxyphenyl)propanoate + O2 = (2Z,4E)-2-hydroxy-6-oxonona-2,4-dienedioate + H(+). The catalysed reaction is (2E)-3-(2,3-dihydroxyphenyl)prop-2-enoate + O2 = (2Z,4E,7E)-2-hydroxy-6-oxonona-2,4,7-trienedioate + H(+). It functions in the pathway aromatic compound metabolism; 3-phenylpropanoate degradation. In terms of biological role, catalyzes the non-heme iron(II)-dependent oxidative cleavage of 2,3-dihydroxyphenylpropionic acid and 2,3-dihydroxicinnamic acid into 2-hydroxy-6-ketononadienedioate and 2-hydroxy-6-ketononatrienedioate, respectively. The polypeptide is 2,3-dihydroxyphenylpropionate/2,3-dihydroxicinnamic acid 1,2-dioxygenase 2 (mhpB2) (Pseudomonas putida (Arthrobacter siderocapsulatus)).